Here is a 108-residue protein sequence, read N- to C-terminus: Ig kappa chain V-V region NQ5-89.4 (108 aa).

A framework-1 region spans residues 1-23 (DIQMTQTTSSLSASLGHRVTITC). The cysteines at positions 23 and 88 are disulfide-linked. Residues 24 to 34 (SASQDISNYLN) are complementarity-determining-1. The tract at residues 35–49 (WYQQKPDGTVKLLIY) is framework-2. Residues 50–56 (YTSRLHS) form a complementarity-determining-2 region. A framework-3 region spans residues 57–88 (GVPSRFSGSGSATDYSLTITNLQQEDXATYXC). The segment at 89-97 (QQGNTLPYT) is complementarity-determining-3. A framework-4 region spans residues 98–107 (FGGGTKLXIK).

Functionally, anti-2-phenyl oxazolone (PHOX) Antibody. The sequence is that of Ig kappa chain V-V region NQ5-89.4 from Mus musculus (Mouse).